A 714-amino-acid polypeptide reads, in one-letter code: Hormonally up-regulated neu tumor-associated kinase (714 aa).

Residues 1 to 15 (MPAAAGDGLLGEPAA) are compositionally biased toward low complexity. Residues 1 to 26 (MPAAAGDGLLGEPAAPGGGGGAEDAA) form a disordered region. A Protein kinase domain is found at 62 to 320 (LIGSRKLGEG…IQQALANRWL (259 aa)). ATP contacts are provided by residues 68 to 76 (LGEGSFAKV) and Lys-91. Asp-186 functions as the Proton acceptor in the catalytic mechanism. The span at 437 to 461 (KKPKEQEKRGDFLHRPFSKKLDKNL) shows a compositional bias: basic and acidic residues. Disordered stretches follow at residues 437 to 471 (KKPK…SGSL), 518 to 552 (MEFI…HKED), and 590 to 615 (ARRN…HTPL). Over residues 599-611 (LSPGLPSGSMSPL) the composition is skewed to low complexity.

This sequence belongs to the protein kinase superfamily. CAMK Ser/Thr protein kinase family. SNF1 subfamily.

It carries out the reaction L-seryl-[protein] + ATP = O-phospho-L-seryl-[protein] + ADP + H(+). The enzyme catalyses L-threonyl-[protein] + ATP = O-phospho-L-threonyl-[protein] + ADP + H(+). The chain is Hormonally up-regulated neu tumor-associated kinase (HUNK) from Homo sapiens (Human).